A 274-amino-acid polypeptide reads, in one-letter code: tRNA (guanine-N(7)-)-methyltransferase (274 aa).

The segment at 16-40 is disordered; the sequence is ASASRGAATGSRGVAPAVPRGGAPA. S-adenosyl-L-methionine-binding residues include Glu-106, Glu-131, Asp-158, and Asp-181. Asp-181 is a catalytic residue. Substrate contacts are provided by residues Lys-185, Asp-217, and 252-255; that span reads TKFE.

The protein belongs to the class I-like SAM-binding methyltransferase superfamily. TrmB family.

The enzyme catalyses guanosine(46) in tRNA + S-adenosyl-L-methionine = N(7)-methylguanosine(46) in tRNA + S-adenosyl-L-homocysteine. The protein operates within tRNA modification; N(7)-methylguanine-tRNA biosynthesis. Functionally, catalyzes the formation of N(7)-methylguanine at position 46 (m7G46) in tRNA. The chain is tRNA (guanine-N(7)-)-methyltransferase from Verminephrobacter eiseniae (strain EF01-2).